A 176-amino-acid chain; its full sequence is 3-hydroxyanthranilate 3,4-dioxygenase (176 aa).

An O2-binding site is contributed by arginine 44. The Fe cation site is built by histidine 48, glutamate 54, and histidine 92. A substrate-binding site is contributed by glutamate 54. The substrate site is built by arginine 96 and glutamate 106. Fe cation is bound by residues cysteine 121, cysteine 124, cysteine 158, and cysteine 161.

Belongs to the 3-HAO family. Homodimer. The cofactor is Fe(2+).

It catalyses the reaction 3-hydroxyanthranilate + O2 = (2Z,4Z)-2-amino-3-carboxymuconate 6-semialdehyde. Its pathway is cofactor biosynthesis; NAD(+) biosynthesis; quinolinate from L-kynurenine: step 3/3. Functionally, catalyzes the oxidative ring opening of 3-hydroxyanthranilate to 2-amino-3-carboxymuconate semialdehyde, which spontaneously cyclizes to quinolinate. The protein is 3-hydroxyanthranilate 3,4-dioxygenase of Xanthomonas oryzae pv. oryzae (strain MAFF 311018).